A 355-amino-acid chain; its full sequence is Holliday junction branch migration complex subunit RuvB (355 aa).

The large ATPase domain (RuvB-L) stretch occupies residues 4–190 (TDKLAAERII…FGIVARLEFY (187 aa)). ATP is bound by residues Leu-29, Arg-30, Gly-71, Lys-74, Thr-75, Thr-76, 137-139 (EDY), Arg-180, Tyr-190, and Arg-227. Thr-75 contributes to the Mg(2+) binding site. Residues 191–261 (DADQLSRIVQ…IADAALAMLD (71 aa)) are small ATPAse domain (RuvB-S). The tract at residues 264–355 (PVGFDLMDRK…QSIWDTPDAQ (92 aa)) is head domain (RuvB-H). DNA contacts are provided by Arg-300, Arg-319, and Arg-324.

It belongs to the RuvB family. As to quaternary structure, homohexamer. Forms an RuvA(8)-RuvB(12)-Holliday junction (HJ) complex. HJ DNA is sandwiched between 2 RuvA tetramers; dsDNA enters through RuvA and exits via RuvB. An RuvB hexamer assembles on each DNA strand where it exits the tetramer. Each RuvB hexamer is contacted by two RuvA subunits (via domain III) on 2 adjacent RuvB subunits; this complex drives branch migration. In the full resolvosome a probable DNA-RuvA(4)-RuvB(12)-RuvC(2) complex forms which resolves the HJ.

Its subcellular location is the cytoplasm. It carries out the reaction ATP + H2O = ADP + phosphate + H(+). The RuvA-RuvB-RuvC complex processes Holliday junction (HJ) DNA during genetic recombination and DNA repair, while the RuvA-RuvB complex plays an important role in the rescue of blocked DNA replication forks via replication fork reversal (RFR). RuvA specifically binds to HJ cruciform DNA, conferring on it an open structure. The RuvB hexamer acts as an ATP-dependent pump, pulling dsDNA into and through the RuvAB complex. RuvB forms 2 homohexamers on either side of HJ DNA bound by 1 or 2 RuvA tetramers; 4 subunits per hexamer contact DNA at a time. Coordinated motions by a converter formed by DNA-disengaged RuvB subunits stimulates ATP hydrolysis and nucleotide exchange. Immobilization of the converter enables RuvB to convert the ATP-contained energy into a lever motion, pulling 2 nucleotides of DNA out of the RuvA tetramer per ATP hydrolyzed, thus driving DNA branch migration. The RuvB motors rotate together with the DNA substrate, which together with the progressing nucleotide cycle form the mechanistic basis for DNA recombination by continuous HJ branch migration. Branch migration allows RuvC to scan DNA until it finds its consensus sequence, where it cleaves and resolves cruciform DNA. This chain is Holliday junction branch migration complex subunit RuvB, found in Burkholderia multivorans (strain ATCC 17616 / 249).